Consider the following 247-residue polypeptide: MSDPLILIPARLAATRLPSKPLADIAGVPMIVHVWRRAVEAGIGPVVVATDTDAVAEVIEARGGLAVMTRPDHPSGSDRLAEALEIVDPDGNHDVVVNVQGDLPTIDPAIIAASVMPLADPQVDIATLCAVIHRPEEMDDPNVVKIIGHTVGPNRLRALAFTRARAPWGDGPLFHHIGLYAYRRKALARFVALPQGELEQREKLEQLRALEAGMRIDAMIVEDLPLGVDTPADLERARTLLAIRRLN.

Belongs to the KdsB family.

The protein localises to the cytoplasm. The enzyme catalyses 3-deoxy-alpha-D-manno-oct-2-ulosonate + CTP = CMP-3-deoxy-beta-D-manno-octulosonate + diphosphate. Its pathway is nucleotide-sugar biosynthesis; CMP-3-deoxy-D-manno-octulosonate biosynthesis; CMP-3-deoxy-D-manno-octulosonate from 3-deoxy-D-manno-octulosonate and CTP: step 1/1. The protein operates within bacterial outer membrane biogenesis; lipopolysaccharide biosynthesis. In terms of biological role, activates KDO (a required 8-carbon sugar) for incorporation into bacterial lipopolysaccharide in Gram-negative bacteria. This Methylorubrum extorquens (strain CM4 / NCIMB 13688) (Methylobacterium extorquens) protein is 3-deoxy-manno-octulosonate cytidylyltransferase.